The sequence spans 425 residues: Serine hydroxymethyltransferase 2 (425 aa).

(6S)-5,6,7,8-tetrahydrofolate-binding positions include leucine 121 and 125–127 (GHL). The residue at position 230 (lysine 230) is an N6-(pyridoxal phosphate)lysine.

This sequence belongs to the SHMT family. As to quaternary structure, homodimer. Pyridoxal 5'-phosphate serves as cofactor.

It is found in the cytoplasm. It carries out the reaction (6R)-5,10-methylene-5,6,7,8-tetrahydrofolate + glycine + H2O = (6S)-5,6,7,8-tetrahydrofolate + L-serine. It participates in one-carbon metabolism; tetrahydrofolate interconversion. The protein operates within amino-acid biosynthesis; glycine biosynthesis; glycine from L-serine: step 1/1. Its function is as follows. Catalyzes the reversible interconversion of serine and glycine with tetrahydrofolate (THF) serving as the one-carbon carrier. This reaction serves as the major source of one-carbon groups required for the biosynthesis of purines, thymidylate, methionine, and other important biomolecules. Also exhibits THF-independent aldolase activity toward beta-hydroxyamino acids, producing glycine and aldehydes, via a retro-aldol mechanism. This chain is Serine hydroxymethyltransferase 2, found in Mycobacterium bovis (strain ATCC BAA-935 / AF2122/97).